A 186-amino-acid chain; its full sequence is ATP synthase subunit delta (186 aa).

The protein belongs to the ATPase delta chain family. F-type ATPases have 2 components, F(1) - the catalytic core - and F(0) - the membrane proton channel. F(1) has five subunits: alpha(3), beta(3), gamma(1), delta(1), epsilon(1). F(0) has three main subunits: a(1), b(2) and c(10-14). The alpha and beta chains form an alternating ring which encloses part of the gamma chain. F(1) is attached to F(0) by a central stalk formed by the gamma and epsilon chains, while a peripheral stalk is formed by the delta and b chains.

It is found in the cell inner membrane. Its function is as follows. F(1)F(0) ATP synthase produces ATP from ADP in the presence of a proton or sodium gradient. F-type ATPases consist of two structural domains, F(1) containing the extramembraneous catalytic core and F(0) containing the membrane proton channel, linked together by a central stalk and a peripheral stalk. During catalysis, ATP synthesis in the catalytic domain of F(1) is coupled via a rotary mechanism of the central stalk subunits to proton translocation. In terms of biological role, this protein is part of the stalk that links CF(0) to CF(1). It either transmits conformational changes from CF(0) to CF(1) or is implicated in proton conduction. The polypeptide is ATP synthase subunit delta (Bradyrhizobium diazoefficiens (strain JCM 10833 / BCRC 13528 / IAM 13628 / NBRC 14792 / USDA 110)).